Here is a 525-residue protein sequence, read N- to C-terminus: Mitogen-activated protein kinase kinase 5 (525 aa).

The Protein kinase domain occupies 59 to 317 (ETEGGFLGKG…CTELLRHPFI (259 aa)). ATP is bound by residues 65–73 (LGKGSSGSV) and Lys88. Asp178 functions as the Proton acceptor in the catalytic mechanism. Low complexity predominate over residues 358–367 (SALPLASEGG). 2 disordered regions span residues 358–392 (SALP…ERHD) and 438–468 (SASV…AQHR).

Belongs to the protein kinase superfamily. STE Ser/Thr protein kinase family. MAP kinase kinase subfamily. Mg(2+) is required as a cofactor.

The catalysed reaction is L-tyrosyl-[protein] + ATP = O-phospho-L-tyrosyl-[protein] + ADP + H(+). The enzyme catalyses L-seryl-[protein] + ATP = O-phospho-L-seryl-[protein] + ADP + H(+). It catalyses the reaction L-threonyl-[protein] + ATP = O-phospho-L-threonyl-[protein] + ADP + H(+). Protein kinase which phosphorylates and activates MPK4 in vitro. The chain is Mitogen-activated protein kinase kinase 5 from Leishmania mexicana.